The primary structure comprises 155 residues: Aspartate carbamoyltransferase regulatory chain (155 aa).

Residues C109, C114, C138, and C141 each contribute to the Zn(2+) site.

The protein belongs to the PyrI family. Contains catalytic and regulatory chains. The cofactor is Zn(2+).

Functionally, involved in allosteric regulation of aspartate carbamoyltransferase. The chain is Aspartate carbamoyltransferase regulatory chain from Vibrio cholerae serotype O1 (strain ATCC 39315 / El Tor Inaba N16961).